A 103-amino-acid chain; its full sequence is uncharacterized protein (103 aa).

Transmembrane regions (helical) follow at residues 12–34 (GFSW…LTIS), 49–66 (TLMS…ALIA), and 79–101 (FARG…VAGG).

It is found in the cell membrane. This is an uncharacterized protein from Pasteurella multocida (strain Pm70).